Consider the following 594-residue polypeptide: Aspartate--tRNA ligase (594 aa).

Residue Glu171 coordinates L-aspartate. Positions 195-198 (QLFK) are aspartate. Arg217 provides a ligand contact to L-aspartate. ATP is bound by residues 217-219 (RDE) and Gln226. An L-aspartate-binding site is contributed by His449. Residue Glu483 participates in ATP binding. Arg490 serves as a coordination point for L-aspartate. An ATP-binding site is contributed by 535–538 (GLDR).

The protein belongs to the class-II aminoacyl-tRNA synthetase family. Type 1 subfamily. As to quaternary structure, homodimer.

It localises to the cytoplasm. It catalyses the reaction tRNA(Asp) + L-aspartate + ATP = L-aspartyl-tRNA(Asp) + AMP + diphosphate. Functionally, catalyzes the attachment of L-aspartate to tRNA(Asp) in a two-step reaction: L-aspartate is first activated by ATP to form Asp-AMP and then transferred to the acceptor end of tRNA(Asp). The protein is Aspartate--tRNA ligase of Proteus mirabilis (strain HI4320).